An 80-amino-acid chain; its full sequence is Gamma-conotoxin-like Am6.6 (80 aa).

A signal peptide spans 1 to 19 (MEKLTILLLVAAILMSTQA). Positions 20–45 (LNQEQRQQAKINLLSKKKPSAERWRR) are excised as a propeptide. Disulfide bonds link cysteine 47-cysteine 61, cysteine 54-cysteine 65, and cysteine 60-cysteine 70. Residues glutamate 56 and glutamate 59 each carry the 4-carboxyglutamate modification. At glutamate 71 the chain carries 4-carboxyglutamate. 4-hydroxyproline is present on proline 76. A propeptide spanning residues 78 to 80 (RAI) is cleaved from the precursor.

Belongs to the conotoxin O2 family. As to expression, expressed by the venom duct.

The protein resides in the secreted. Gamma-conotoxins may act on voltage-gated non-specific cation pacemaker channels (HCN). The sequence is that of Gamma-conotoxin-like Am6.6 from Conus amadis (Amadis cone).